Consider the following 187-residue polypeptide: Cell division protein SepF (187 aa).

The disordered stretch occupies residues glutamate 21–serine 97. 2 stretches are compositionally biased toward polar residues: residues glutamate 38–threonine 63 and arginine 70–serine 97.

Belongs to the SepF family. In terms of assembly, homodimer. Interacts with FtsZ.

Its subcellular location is the cytoplasm. In terms of biological role, cell division protein that is part of the divisome complex and is recruited early to the Z-ring. Probably stimulates Z-ring formation, perhaps through the cross-linking of FtsZ protofilaments. Its function overlaps with FtsA. The chain is Cell division protein SepF from Staphylococcus aureus (strain Mu3 / ATCC 700698).